We begin with the raw amino-acid sequence, 212 residues long: A-kinase-interacting protein 1 (212 aa).

Interacts with PRKACA and RELA.

The protein resides in the nucleus. Functionally, enhances NF-kappa-B transcriptional activity by regulating the nuclear localization of the NF-kappa-B subunit RELA and promoting the phosphorylation of RELA by PRKACA. Regulates the effect of the cAMP-dependent protein kinase signaling pathway on the NF-kappa-B activation cascade. This chain is A-kinase-interacting protein 1 (Akip1), found in Mus musculus (Mouse).